Here is a 1342-residue protein sequence, read N- to C-terminus: DNA-directed RNA polymerase subunit beta (1342 aa).

2 positions are modified to N6-acetyllysine: Lys-1022 and Lys-1200.

The protein belongs to the RNA polymerase beta chain family. The RNAP catalytic core consists of 2 alpha, 1 beta, 1 beta' and 1 omega subunit. When a sigma factor is associated with the core the holoenzyme is formed, which can initiate transcription.

The catalysed reaction is RNA(n) + a ribonucleoside 5'-triphosphate = RNA(n+1) + diphosphate. In terms of biological role, DNA-dependent RNA polymerase catalyzes the transcription of DNA into RNA using the four ribonucleoside triphosphates as substrates. This chain is DNA-directed RNA polymerase subunit beta, found in Escherichia coli O81 (strain ED1a).